A 284-amino-acid polypeptide reads, in one-letter code: UDP-N-acetylenolpyruvoylglucosamine reductase (284 aa).

Residues 21-180 (KIGGPARLFV…LKAAFKLKKA (160 aa)) form the FAD-binding PCMH-type domain. Arginine 159 is an active-site residue. Serine 209 functions as the Proton donor in the catalytic mechanism. Residue glutamate 280 is part of the active site.

It belongs to the MurB family. Requires FAD as cofactor.

It localises to the cytoplasm. The enzyme catalyses UDP-N-acetyl-alpha-D-muramate + NADP(+) = UDP-N-acetyl-3-O-(1-carboxyvinyl)-alpha-D-glucosamine + NADPH + H(+). Its pathway is cell wall biogenesis; peptidoglycan biosynthesis. Cell wall formation. This chain is UDP-N-acetylenolpyruvoylglucosamine reductase, found in Pseudothermotoga lettingae (strain ATCC BAA-301 / DSM 14385 / NBRC 107922 / TMO) (Thermotoga lettingae).